The sequence spans 545 residues: Probable acyl-activating enzyme 4 (545 aa).

This sequence belongs to the ATP-dependent AMP-binding enzyme family. In terms of tissue distribution, expressed in roots, leaves, stems, flowers and developing seeds.

Functionally, may act as an acid--thiol ligase that activates carboxylic acids by forming acyl-CoAs. This Arabidopsis thaliana (Mouse-ear cress) protein is Probable acyl-activating enzyme 4 (AEE4).